Reading from the N-terminus, the 278-residue chain is Large ribosomal subunit protein uL2 (278 aa).

2 disordered regions span residues 28-56 (KPVK…GIAG) and 221-278 (RGVA…KKKR). Over residues 269-278 (IRSRHAKKKR) the composition is skewed to basic residues.

Belongs to the universal ribosomal protein uL2 family. Part of the 50S ribosomal subunit. Forms a bridge to the 30S subunit in the 70S ribosome.

One of the primary rRNA binding proteins. Required for association of the 30S and 50S subunits to form the 70S ribosome, for tRNA binding and peptide bond formation. It has been suggested to have peptidyltransferase activity; this is somewhat controversial. Makes several contacts with the 16S rRNA in the 70S ribosome. This Rhizorhabdus wittichii (strain DSM 6014 / CCUG 31198 / JCM 15750 / NBRC 105917 / EY 4224 / RW1) (Sphingomonas wittichii) protein is Large ribosomal subunit protein uL2.